Reading from the N-terminus, the 168-residue chain is Peptide deformylase (168 aa).

Fe cation-binding residues include Cys-92 and His-134. Residue Glu-135 is part of the active site. A Fe cation-binding site is contributed by His-138.

This sequence belongs to the polypeptide deformylase family. Fe(2+) serves as cofactor.

It catalyses the reaction N-terminal N-formyl-L-methionyl-[peptide] + H2O = N-terminal L-methionyl-[peptide] + formate. Functionally, removes the formyl group from the N-terminal Met of newly synthesized proteins. Requires at least a dipeptide for an efficient rate of reaction. N-terminal L-methionine is a prerequisite for activity but the enzyme has broad specificity at other positions. This chain is Peptide deformylase, found in Azotobacter vinelandii (strain DJ / ATCC BAA-1303).